The chain runs to 161 residues: Disulfide bond formation protein B (161 aa).

Residues 1 to 8 (MQANSRAY) lie on the Cytoplasmic side of the membrane. A helical membrane pass occupies residues 9 to 25 (FLLIAFISFGLVGFALY). At 26–43 (LQFEKGYQPCPLCIMQRF) the chain is on the periplasmic side. The cysteines at positions 35 and 38 are disulfide-linked. A helical membrane pass occupies residues 44-58 (AFIGIGLFSLLAVIA). Residues 59-63 (QNTRS) are Cytoplasmic-facing. A helical transmembrane segment spans residues 64-81 (LWQGLGMLSGVGGIAVAV). The Periplasmic segment spans residues 82 to 136 (YHVSLLLNPKASCGIDPLENWVNALPTAKVLPQVFYSDGLCTAPLPPVLGLSVPA). Cys94 and Cys122 form a disulfide bridge. A helical transmembrane segment spans residues 137 to 155 (WSLIWLFILTLTLAVGLIR). Topologically, residues 156 to 161 (REKNFR) are cytoplasmic.

This sequence belongs to the DsbB family.

The protein localises to the cell inner membrane. In terms of biological role, required for disulfide bond formation in some periplasmic proteins. Acts by oxidizing the DsbA protein. This chain is Disulfide bond formation protein B, found in Cupriavidus pinatubonensis (strain JMP 134 / LMG 1197) (Cupriavidus necator (strain JMP 134)).